Here is a 225-residue protein sequence, read N- to C-terminus: MDLLPSRYKIHKTKLRWILTMMTMMMMMVMRRGESMRLDMESGNTKCISDDIKTNYMTVGTYSIVNPNEGHHLPPSHKLFVTVSSPKGKSHHHAENVESGKFVFTAEETGDYMTCFVAPGYRPTAKFAVDFEWKSGVEAKDWTTIAKRGQITMLEVEVRKLLDVTETIHEEMFQLIEREREMQELNRSTNSRMAALSLLSFVVTMSVAGLQLRHLKSFLERKKLL.

Positions 1–35 (MDLLPSRYKIHKTKLRWILTMMTMMMMMVMRRGES) are cleaved as a signal peptide. Over 36-193 (MRLDMESGNT…ELNRSTNSRM (158 aa)) the chain is Lumenal. Residues 45-160 (TKCISDDIKT…ITMLEVEVRK (116 aa)) enclose the GOLD domain. The stretch at 175 to 188 (LIEREREMQELNRS) forms a coiled coil. R178 carries the omega-N-methylated arginine modification. N186 carries N-linked (GlcNAc...) asparagine glycosylation. The chain crosses the membrane as a helical span at residues 194 to 210 (AALSLLSFVVTMSVAGL). Residues 211-225 (QLRHLKSFLERKKLL) are Cytoplasmic-facing. The short motif at 218–219 (FL) is the COPII vesicle coat-binding element. The COPI vesicle coat-binding motif lies at 218-225 (FLERKKLL).

This sequence belongs to the EMP24/GP25L family. Probably oligomerizes with other members of the EMP24/GP25L family. Associates with the COPI vesicle coat (coatomer). Associates with the COPII vesicle coat (coatomer).

The protein resides in the endoplasmic reticulum membrane. It is found in the golgi apparatus. The protein localises to the cis-Golgi network membrane. Its subcellular location is the golgi stack membrane. Its function is as follows. Involved in vesicular protein trafficking. Mainly functions in the early secretory pathway. Thought to act as cargo receptor at the lumenal side for incorporation of secretory cargo molecules into transport vesicles and to be involved in vesicle coat formation at the cytoplasmic side. The polypeptide is Transmembrane emp24 domain-containing protein p24delta11 (Arabidopsis thaliana (Mouse-ear cress)).